An 891-amino-acid polypeptide reads, in one-letter code: MNKPQTPMMRQYLSIKAKYKDEILFFRLGDFYEMFFDEAVEVSRILNLTLTKRNDVPMCGIPYHAAKIYIARLLRAGKKIAICEQVTEPVAGGLTERKVVEVITPGTVAEDDFLEQGSNNYLAAVYCSNKKTEGNSGFDYYAGLAYIDVTTGNFFATSFPKTDFKEQFLKEIGRINPKEILIQQSIQNEFPALKQILSEFPSMMQNFYPDWSFNPDQAEKRLCSTFGTENLKGFLLNTDSPEVPPAGLLLQYLEEISGRDISHISGIKIYAESDFVSLDDSTRKNLELLTNLRDNSPSYSLFESVNYTKTAMGTRLLRRRISYPLRSKNEIDKRLDKVNSLFKDGKASAIIRETLSSILDIERLSGRIAMQKTHGKDLLALKQSLNSVIRMGSLIEEKKLNFLQLNDEEKKLLTEIRDLLENSIDDDCTIALNDGKLIKKGFSKKVDTIKNIKENAHEILEKYLDDERKKTGINNLKIKYNRMMGYFLEVSLGNISAVPDYFIRQRSLSNADRFTTESLKQIEDNINNSEERLIEAEKEVFDEVCTEIGSHHCFLQKLAEEVAELDVNQSFAQAAVLHAWTRPELCSDSGILNITGGRHPVVENHLRAGDFVPNSIKLLSGENSNPEDETIPSFAVITGPNMAGKSTFLRQTALICLLAQIGSFVPAEKAVLSPVDKIFCRVGATDNLARGESTFLVEMIETAYILNSATRNSLVIMDEVGRGTSMEDGLAIAQAVSEHLLNTIKAKTLFATHYHELTRLEHEKIINLKLDVLEAEGKIVFLKKVVHGAAGNSYGIHVAGLAGIPQSVLTRAENLLYMRSQFQKERTIQEARPSAQGSEEKTPSSPAEKGLSLFPEEELILNEILSTDPDETAPIKALQLIASWKNRLSGK.

639–646 (GPNMAGKS) is an ATP binding site. A disordered region spans residues 827 to 854 (TIQEARPSAQGSEEKTPSSPAEKGLSLF).

It belongs to the DNA mismatch repair MutS family.

In terms of biological role, this protein is involved in the repair of mismatches in DNA. It is possible that it carries out the mismatch recognition step. This protein has a weak ATPase activity. In Treponema denticola (strain ATCC 35405 / DSM 14222 / CIP 103919 / JCM 8153 / KCTC 15104), this protein is DNA mismatch repair protein MutS.